We begin with the raw amino-acid sequence, 65 residues long: Large ribosomal subunit protein bL35 (65 aa).

Positions 1 to 23 are disordered; that stretch reads MPKMKSNRGAAKRFKRTGSGKFK. The span at 10–23 shows a compositional bias: basic residues; the sequence is AAKRFKRTGSGKFK.

Belongs to the bacterial ribosomal protein bL35 family.

In Acidithiobacillus ferrooxidans (strain ATCC 53993 / BNL-5-31) (Leptospirillum ferrooxidans (ATCC 53993)), this protein is Large ribosomal subunit protein bL35.